Here is a 369-residue protein sequence, read N- to C-terminus: 4-hydroxyproline betaine 2-epimerase (369 aa).

Tyrosine 56 and glutamine 162 together coordinate substrate. Residue lysine 164 is the Proton donor/acceptor of the active site. Mg(2+) is bound by residues aspartate 194, glutamate 219, and aspartate 242. Catalysis depends on lysine 266, which acts as the Proton donor/acceptor. Substrate is bound at residue alanine 295.

The protein belongs to the mandelate racemase/muconate lactonizing enzyme family. It depends on Mg(2+) as a cofactor.

It carries out the reaction trans-4-hydroxy-L-proline betaine = cis-4-hydroxy-D-proline betaine. The enzyme catalyses L-proline betaine = D-proline betaine. Functionally, catalyzes the 2-epimerization of trans-4-hydroxy-L-proline betaine (tHyp-B) to cis-4-hydroxy-D-proline betaine (cHyp-B). Is involved in a catabolic pathway that degrades tHyp-B to alpha-ketoglutarate. This pathway would permit the utilization of tHyp-B as a carbon and nitrogen source in the absence of osmotic stress, since tHyp-B functions as an osmolyte and is not catabolized when it is needed as osmoprotectant. Can also catalyze the racemization of L-proline betaine. The protein is 4-hydroxyproline betaine 2-epimerase (hpbD) of Paracoccus denitrificans (strain Pd 1222).